The primary structure comprises 167 residues: uncharacterized protein (167 aa).

Positions 1–21 (MFDFSFPTPASAGTRMGPASC) are disordered.

This is an uncharacterized protein from Homo sapiens (Human).